The following is a 333-amino-acid chain: Terpene synthase 2 (333 aa).

Positions 82-87 match the DDxx(x)D/E motif motif; it reads DDDLDT. The NDxxSxxxD/E motif motif lies at 219–227; sequence NDCVSYAKE.

It belongs to the terpene synthase family.

The enzyme catalyses (2E,6E)-farnesyl diphosphate = (E)-beta-farnesene + diphosphate. The catalysed reaction is (2E,6E)-farnesyl diphosphate = (1S,2S,4R)-beta-elemene + diphosphate. Functionally, terpene synthase that converts its substrate farnesyl diphosphate (FPP) into the sesquiterpene (E)-beta-farnesene as major product. Is also able to convert FPP into delta-elemene, beta-elemene, (E)-beta-caryophyllene, 9-epi-(E)-caryophyllene, and a yet unidentified sesquiterpene. The protein is Terpene synthase 2 of Dictyostelium purpureum (Slime mold).